The sequence spans 273 residues: Phosphatidylglycerol--prolipoprotein diacylglyceryl transferase (273 aa).

7 helical membrane-spanning segments follow: residues 21–41 (VSVRWYGLMYLVGFMFALWLA), 60–80 (LLFAGFLGVVIGGRVGYVIFY), 95–115 (VWTGGMSFHGGLLGVITAMFW), 124–144 (FFGVADFVAPLVPFGLGMGRM), 176–196 (SQLYEMFLEGIVLFFILNWFI), 203–223 (GAVSGLFLAGYGTFRFLVEFV), and 237–257 (ISMGQILSSPMIILGILMMVW). Residue arginine 143 participates in a 1,2-diacyl-sn-glycero-3-phospho-(1'-sn-glycerol) binding.

The protein belongs to the Lgt family.

It localises to the cell inner membrane. The catalysed reaction is L-cysteinyl-[prolipoprotein] + a 1,2-diacyl-sn-glycero-3-phospho-(1'-sn-glycerol) = an S-1,2-diacyl-sn-glyceryl-L-cysteinyl-[prolipoprotein] + sn-glycerol 1-phosphate + H(+). Its pathway is protein modification; lipoprotein biosynthesis (diacylglyceryl transfer). Its function is as follows. Catalyzes the transfer of the diacylglyceryl group from phosphatidylglycerol to the sulfhydryl group of the N-terminal cysteine of a prolipoprotein, the first step in the formation of mature lipoproteins. This Vibrio campbellii (strain ATCC BAA-1116) protein is Phosphatidylglycerol--prolipoprotein diacylglyceryl transferase.